The primary structure comprises 2048 residues: Fanconi anemia group M protein (2048 aa).

Residues 1–37 (MSGRQRTLFQTWGSSISRSSGTPGCSSGTERPQSPGS) are compositionally biased toward polar residues. The tract at residues 1-45 (MSGRQRTLFQTWGSSISRSSGTPGCSSGTERPQSPGSSKAPLPAA) is disordered. Serine 34 bears the Phosphoserine mark. The region spanning 98–266 (ISRAALFCNT…QVITNLLIGQ (169 aa)) is the Helicase ATP-binding domain. 111–118 (LPTGLGKT) lines the ATP pocket. Positions 214–217 (DEAH) match the DEAH box motif. Residues 452-627 (KLEEVVIEHF…VLHFYQRSPR (176 aa)) enclose the Helicase C-terminal domain. The interval 661–800 (SIFSYRDGMR…TSTFIAPRNE (140 aa)) is interaction with CENPS/CENPSX. Disordered stretches follow at residues 1433–1476 (NVLN…NFPK), 1518–1540 (LSEE…EQDS), and 1668–1809 (ILPD…HTSL). The segment covering 1518-1538 (LSEEDAEYVSSDENDESENEQ) has biased composition (acidic residues). Residues serine 1673 and serine 1674 each carry the phosphoserine modification. Polar residues-rich tracts occupy residues 1703 to 1745 (HCLN…ISEV), 1753 to 1767 (HNEV…TTVD), and 1786 to 1797 (EDSSTSGASCSK). An interaction with FAAP24 region spans residues 1727–2048 (LAKQSKQTSL…LNQDRLKSDI (322 aa)).

It belongs to the DEAD box helicase family. DEAH subfamily. FANCM sub-subfamily. In terms of assembly, component of the Fanconi anemia (FA) core complex, which consists of CENPS, CENPX, FANCA, FANCB, FANCC, FANCE, FANCF, FANCG, FANCL, FANCM, FAAP24 and FAAP100. The FA core complex associates with Bloom syndrome (BLM) complex, which consists of at least BLM, DNA topoisomerase 3-alpha/TOP3A, RMI1/BLAP75, RPA1/RPA70 and RPA2/RPA32. This supercomplex between FA and BLM complexes has been called BRAFT. Forms a discrete complex with CENPS and CENPX, called FANCM-MHF; this interaction stimulates DNA binding and replication fork remodeling by FANCM and stabilizes the binding partners. Forms a heterodimer with FAAP24; this interaction increases FANCM single-stranded DNA-binding activity. In terms of processing, phosphorylated; hyperphosphorylated in response to genotoxic stress. Expressed in germ cells of fetal and adult ovaries. In fetal ovaries, it is present in oogonia but expression is stronger in pachytene stage oocytes. Expressed in oocytes arrested at the diplotene stage of prophase I during the last trimester of pregnancy and in adults. Expressed in the testis.

It localises to the nucleus. The catalysed reaction is ATP + H2O = ADP + phosphate + H(+). Functionally, DNA-dependent ATPase component of the Fanconi anemia (FA) core complex. Required for the normal activation of the FA pathway, leading to monoubiquitination of the FANCI-FANCD2 complex in response to DNA damage, cellular resistance to DNA cross-linking drugs, and prevention of chromosomal breakage. In complex with CENPS and CENPX, binds double-stranded DNA (dsDNA), fork-structured DNA (fsDNA) and Holliday junction substrates. Its ATP-dependent DNA branch migration activity can process branched DNA structures such as a movable replication fork. This activity is strongly stimulated in the presence of CENPS and CENPX. In complex with FAAP24, efficiently binds to single-strand DNA (ssDNA), splayed-arm DNA, and 3'-flap substrates. In vitro, on its own, strongly binds ssDNA oligomers and weakly fsDNA, but does not bind to dsDNA. This Homo sapiens (Human) protein is Fanconi anemia group M protein (FANCM).